Consider the following 444-residue polypeptide: Glycogen synthase (444 aa).

R15 is an ADP-alpha-D-glucose binding site.

It belongs to the glycosyltransferase 1 family. Bacterial/plant glycogen synthase subfamily.

The enzyme catalyses [(1-&gt;4)-alpha-D-glucosyl](n) + ADP-alpha-D-glucose = [(1-&gt;4)-alpha-D-glucosyl](n+1) + ADP + H(+). It participates in glycan biosynthesis; glycogen biosynthesis. In terms of biological role, synthesizes alpha-1,4-glucan chains using ADP-glucose. This is Glycogen synthase from Deinococcus radiodurans (strain ATCC 13939 / DSM 20539 / JCM 16871 / CCUG 27074 / LMG 4051 / NBRC 15346 / NCIMB 9279 / VKM B-1422 / R1).